The following is a 101-amino-acid chain: Small ribosomal subunit protein uS10 (101 aa).

It belongs to the universal ribosomal protein uS10 family. As to quaternary structure, part of the 30S ribosomal subunit.

In terms of biological role, involved in the binding of tRNA to the ribosomes. In Corynebacterium aurimucosum (strain ATCC 700975 / DSM 44827 / CIP 107346 / CN-1) (Corynebacterium nigricans), this protein is Small ribosomal subunit protein uS10.